The chain runs to 321 residues: MIYHLISKSCQRLNKPNLINNLIKSQKQSIIYSSSSSSGSSKFISNKYFTTTSNSNNNSNNTTTTTTTTLRQDEIDFFNQQSSDWWNPEGTMKPLHRMNPFRVKYICDRLKIYNEKVSKNPIHLPLEGLNVIDVGCGVGLLTESLSRLGASKVVGLDAAKNNILMAISHASFDQKLNENIQNKSLNYLESTIENFYNIENDQQFDAVCSLEVIEHVDNPKQFIDYLSKIVKPGGSIFISTINKTFLSYISAILGAEYIFRMVPVGTHHWDQFIKPKDLESYFDSNNCQITDLKGLVYNPLTCEWDFTNDLNVNYLLHAIKK.

S-adenosyl-L-methionine contacts are provided by Arg-102, Gly-135, Asp-157, and Leu-210. Glu-211, Glu-214, and His-215 together coordinate Mg(2+).

The protein belongs to the class I-like SAM-binding methyltransferase superfamily. UbiG/COQ3 family. Component of a multi-subunit COQ enzyme complex. Requires Mg(2+) as cofactor.

It localises to the mitochondrion inner membrane. The catalysed reaction is a 3,4-dihydroxy-5-(all-trans-polyprenyl)benzoate + S-adenosyl-L-methionine = a 4-hydroxy-3-methoxy-5-(all-trans-polyprenyl)benzoate + S-adenosyl-L-homocysteine + H(+). It catalyses the reaction a 3-demethylubiquinone + S-adenosyl-L-methionine = a ubiquinone + S-adenosyl-L-homocysteine. It carries out the reaction a 3-demethylubiquinol + S-adenosyl-L-methionine = a ubiquinol + S-adenosyl-L-homocysteine + H(+). It participates in cofactor biosynthesis; ubiquinone biosynthesis. O-methyltransferase required for two non-consecutive steps during ubiquinone biosynthesis. Catalyzes the 2 O-methylation of 3,4-dihydroxy-5-(all-trans-polyprenyl)benzoic acid into 4-hydroxy-3-methoxy-5-(all-trans-polyprenyl)benzoic acid. Also catalyzes the last step of ubiquinone biosynthesis by mediating methylation of 3-demethylubiquinone into ubiquinone. Also able to mediate the methylation of 3-demethylubiquinol into ubiquinol. In Dictyostelium discoideum (Social amoeba), this protein is Ubiquinone biosynthesis O-methyltransferase, mitochondrial.